Here is a 1978-residue protein sequence, read N- to C-terminus: Protein MOR1 (1978 aa).

HEAT repeat units follow at residues 48-86 and 165-202; these read DPRL…AADS and IPPK…WIGK. The segment at 230–264 is disordered; it reads AGAKPTRKIRSEQDKEPEAEASSDVVGDGPSEEAV. Over residues 238-247 the composition is skewed to basic and acidic residues; that stretch reads IRSEQDKEPE. HEAT repeat units lie at residues 322 to 359, 363 to 400, and 442 to 479; these read GDFS…GLRT, ASSR…AGCL, and KAHK…SVGM. The segment at 501 to 587 is disordered; the sequence is IAGSGGGDQA…SVEPPEDVEP (87 aa). The segment covering 510-527 has biased composition (low complexity); that stretch reads AGTSSVTVQSSVGSTATG. A compositionally biased stretch (basic and acidic residues) spans 565–577; it reads GKKDGSVRNEGSK. HEAT repeat units follow at residues 849 to 886, 890 to 928, 932 to 969, and 1008 to 1045; these read DIST…EANK, PTGT…AMGP, KASK…AVHL, and VDAI…VSGQ. The disordered stretch occupies residues 1087-1115; it reads SKGVTKISKSTSNGTLKQGNRSRAVPTKG. Polar residues predominate over residues 1093–1107; the sequence is ISKSTSNGTLKQGNR. 4 HEAT repeats span residues 1230–1253, 1254–1286, 1287–1325, and 1328–1365; these read LKVL…MTEA, EAAI…QIIQ, AYSV…TCGT, and GGLL…ILGA. The segment covering 1393 to 1403 has biased composition (basic and acidic residues); the sequence is MEKRREGKPGE. A disordered region spans residues 1393-1431; the sequence is MEKRREGKPGEARAALRRSVRDSGPEVAEQSGDISQTVP. The HEAT 14 repeat unit spans residues 1535–1575; that stretch reads RSCKYVLNTLMQTFQNKKLAHAVKEGTLESLITELLLWLLD. The disordered stretch occupies residues 1837–1862; that stretch reads AAAGRTPSSLPLSTPPPSSLALPSPD.

This sequence belongs to the TOG/XMAP215 family. As to expression, expressed in roots, cotyledons, rosette leaves, stems, open flowers and green siliques.

The protein resides in the cytoplasm. Its subcellular location is the cytoskeleton. The protein localises to the phragmoplast. It localises to the spindle. Functionally, microtubule-binding protein that is essential for cortical microtubules organization and function. Essential for maintaining the interphase cortical array and for correct morphogenesis. Promotes rapid growth and shrinkage of microtubules and suppresses the pausing of interphase microtubules. Regulates the structure and function of microtubule arrays during mitosis and cytokinesis. Probably not required for cellulose microfibrils alignment in roots. The protein is Protein MOR1 (MOR1) of Arabidopsis thaliana (Mouse-ear cress).